The primary structure comprises 452 residues: MSKTRHLFGTDGIRGLANQDPMTVEIAQKLGQAAGLRFTRGVHRHRVLLGKDTRLSGYMIECALVSGFLSAGMDVTLVGPMPTPAIAMLTRSLRADLGVMISASHNPFGDNGIKLFGPDGFKLSDETEAEIEELMRSDLAGRLAAPDRIGRASRLNDAAGRYIENAKASFPRGRRLDGLRIVIDCANGAAYRVAPTALWELGAEVIRIGCEPDGININEQCGSTKPESLCEAVVAHGAHIGIALDGDADRVLIADEKGRLIDGDQILALIARSWGRQGRLNSAQIVATVMSNMGLARCLEGLGLELVRTAVGDRYVVERMRELGANLGGEQSGHMVLSDFATTGDGLVAALQVLAVLVEEGRPASEVCRMFTPFPQMLRNVRFTGKSPLHAPSVQDARRRAEAELGTAGRLLLRESGTEPLVRVMAEAEDPALVERIVAEMCEAIDSAQVVA.

Serine 104 serves as the catalytic Phosphoserine intermediate. Positions 104, 245, 247, and 249 each coordinate Mg(2+). The residue at position 104 (serine 104) is a Phosphoserine.

This sequence belongs to the phosphohexose mutase family. It depends on Mg(2+) as a cofactor. In terms of processing, activated by phosphorylation.

It carries out the reaction alpha-D-glucosamine 1-phosphate = D-glucosamine 6-phosphate. Catalyzes the conversion of glucosamine-6-phosphate to glucosamine-1-phosphate. The sequence is that of Phosphoglucosamine mutase from Gluconacetobacter diazotrophicus (strain ATCC 49037 / DSM 5601 / CCUG 37298 / CIP 103539 / LMG 7603 / PAl5).